The following is a 448-amino-acid chain: MTVITRFAPSPTGKLHIGNVRVALVNWLYAQKYNGNFILRIDDTDRDRSKVEYHEAIIKDLQWLGINWNSSFLQSIRFNKYKAAKQYLISSGRLYECYETPEMLEIERKRQLTSGYPPIYSRKALELTKAQKVQLQAEGYKVHYRFLIDRNKPIIWNDLIKGEIKYDGSNISDPIVIKEDGTMIYMLCSVIDDIEYRISHIIRGEDHITNTAIQIQMFEALGAAIPQLGHLSLIKSDSGKISKRIGGFTIDYLRDQLGIEPMAVNNLLALSGTSNNVDAYFSLESLITKFDLSAFSKSAIIYNENELVTLNHKLLVNTEYDTIKHRLTAIGLPDVTKEFWLAVRHNLNTLNDIKIWWQICYLPTLDKFQEQDAEFLKLAAGLLPSGKLTDNSWDDWVQNIIKATNRRGKALFMPLRLALTGITYGPELKYLLPLIGGEEVKARLLRHQ.

A 'HIGH' region motif is present at residues 9–19 (PSPTGKLHIGN). The short motif at 240-244 (KISKR) is the 'KMSKS' region element. Position 243 (Lys-243) interacts with ATP.

The protein belongs to the class-I aminoacyl-tRNA synthetase family. Glutamate--tRNA ligase type 1 subfamily. In terms of assembly, monomer.

It is found in the cytoplasm. The enzyme catalyses tRNA(Glu) + L-glutamate + ATP = L-glutamyl-tRNA(Glu) + AMP + diphosphate. Catalyzes the attachment of glutamate to tRNA(Glu) in a two-step reaction: glutamate is first activated by ATP to form Glu-AMP and then transferred to the acceptor end of tRNA(Glu). The sequence is that of Glutamate--tRNA ligase 2 from Orientia tsutsugamushi (strain Boryong) (Rickettsia tsutsugamushi).